Reading from the N-terminus, the 292-residue chain is MNNHFKCIGIVGHPRHPTALTTHEMLYRWLCDQGYEVIVEQQIAHELQLKNVPTGTLAEIGQQADLAVVVGGDGNMLGAARTLARYDINVIGINRGNLGFLTDLDPDNALQQLSDVLEGRYISEKRFLLEAQVCQQDRQKRISTAINEVVLHPGKVAHMIEFEVYIDETFAFSQRSDGLIISTPTGSTAYSLSAGGPILTPSLDAITLVPMFPHTLSARPLVINSSSTIRLRFSHRRSDLEISCDSQIALPIQEGEDVLIRRCDYHLNLIHPKDYSYFNTLSTKLGWSKKLF.

Asp73 serves as the catalytic Proton acceptor. NAD(+) is bound by residues 73–74 (DG), 147–148 (NE), His158, Arg175, Asp177, 188–193 (TAYSLS), and Gln247.

This sequence belongs to the NAD kinase family. A divalent metal cation serves as cofactor.

It localises to the cytoplasm. The catalysed reaction is NAD(+) + ATP = ADP + NADP(+) + H(+). In terms of biological role, involved in the regulation of the intracellular balance of NAD and NADP, and is a key enzyme in the biosynthesis of NADP. Catalyzes specifically the phosphorylation on 2'-hydroxyl of the adenosine moiety of NAD to yield NADP. The chain is NAD kinase from Salmonella agona (strain SL483).